A 142-amino-acid polypeptide reads, in one-letter code: Hemoglobin subunit alpha-2 (142 aa).

Residues leucine 2–arginine 142 enclose the Globin domain. O2 is bound at residue histidine 59. Heme b is bound at residue histidine 88.

Belongs to the globin family. Heterotetramer of two alpha chains and two beta chains. In terms of tissue distribution, red blood cells.

In terms of biological role, involved in oxygen transport from the lung to the various peripheral tissues. The polypeptide is Hemoglobin subunit alpha-2 (hba2) (Xenopus laevis (African clawed frog)).